We begin with the raw amino-acid sequence, 99 residues long: Aspartyl/glutamyl-tRNA(Asn/Gln) amidotransferase subunit C (99 aa).

It belongs to the GatC family. Heterotrimer of A, B and C subunits.

The enzyme catalyses L-glutamyl-tRNA(Gln) + L-glutamine + ATP + H2O = L-glutaminyl-tRNA(Gln) + L-glutamate + ADP + phosphate + H(+). It catalyses the reaction L-aspartyl-tRNA(Asn) + L-glutamine + ATP + H2O = L-asparaginyl-tRNA(Asn) + L-glutamate + ADP + phosphate + 2 H(+). Its function is as follows. Allows the formation of correctly charged Asn-tRNA(Asn) or Gln-tRNA(Gln) through the transamidation of misacylated Asp-tRNA(Asn) or Glu-tRNA(Gln) in organisms which lack either or both of asparaginyl-tRNA or glutaminyl-tRNA synthetases. The reaction takes place in the presence of glutamine and ATP through an activated phospho-Asp-tRNA(Asn) or phospho-Glu-tRNA(Gln). This Ralstonia pickettii (strain 12J) protein is Aspartyl/glutamyl-tRNA(Asn/Gln) amidotransferase subunit C.